A 118-amino-acid polypeptide reads, in one-letter code: Large ribosomal subunit protein uL22c (118 aa).

It belongs to the universal ribosomal protein uL22 family. Part of the 50S ribosomal subunit.

It is found in the plastid. It localises to the organellar chromatophore. In terms of biological role, this protein binds specifically to 23S rRNA. Functionally, the globular domain of the protein is located near the polypeptide exit tunnel on the outside of the subunit, while an extended beta-hairpin is found that lines the wall of the exit tunnel in the center of the 70S ribosome. The sequence is that of Large ribosomal subunit protein uL22c (rpl22) from Paulinella chromatophora.